Consider the following 380-residue polypeptide: tRNA(Met) cytidine acetate ligase (380 aa).

ATP contacts are provided by residues Ile-7–His-20, Gly-100, Asn-153, and Arg-178.

It belongs to the TmcAL family.

Its subcellular location is the cytoplasm. It catalyses the reaction cytidine(34) in elongator tRNA(Met) + acetate + ATP = N(4)-acetylcytidine(34) in elongator tRNA(Met) + AMP + diphosphate. Functionally, catalyzes the formation of N(4)-acetylcytidine (ac(4)C) at the wobble position of elongator tRNA(Met), using acetate and ATP as substrates. First activates an acetate ion to form acetyladenylate (Ac-AMP) and then transfers the acetyl group to tRNA to form ac(4)C34. The polypeptide is tRNA(Met) cytidine acetate ligase (Staphylococcus haemolyticus (strain JCSC1435)).